A 435-amino-acid polypeptide reads, in one-letter code: GTPase Der (435 aa).

2 consecutive EngA-type G domains span residues 4 to 167 and 175 to 350; these read PVVA…PEKD and IRFS…DNHN. GTP-binding positions include 10–17, 57–61, 119–122, 181–188, 228–232, and 293–296; these read GRPNVGKS, DTGGI, NKAD, DTAGI, and NKWD. The region spanning 351-435 is the KH-like domain; it reads KRVQSATLND…PIHLIERARK (85 aa).

It belongs to the TRAFAC class TrmE-Era-EngA-EngB-Septin-like GTPase superfamily. EngA (Der) GTPase family. As to quaternary structure, associates with the 50S ribosomal subunit.

In terms of biological role, GTPase that plays an essential role in the late steps of ribosome biogenesis. This chain is GTPase Der, found in Levilactobacillus brevis (strain ATCC 367 / BCRC 12310 / CIP 105137 / JCM 1170 / LMG 11437 / NCIMB 947 / NCTC 947) (Lactobacillus brevis).